Consider the following 94-residue polypeptide: Integration host factor subunit beta (94 aa).

The protein belongs to the bacterial histone-like protein family. In terms of assembly, heterodimer of an alpha and a beta chain.

In terms of biological role, this protein is one of the two subunits of integration host factor, a specific DNA-binding protein that functions in genetic recombination as well as in transcriptional and translational control. The chain is Integration host factor subunit beta from Histophilus somni (strain 129Pt) (Haemophilus somnus).